The sequence spans 128 residues: Large ribosomal subunit protein bL19 (128 aa).

Belongs to the bacterial ribosomal protein bL19 family.

Functionally, this protein is located at the 30S-50S ribosomal subunit interface and may play a role in the structure and function of the aminoacyl-tRNA binding site. The polypeptide is Large ribosomal subunit protein bL19 (Mesoplasma florum (strain ATCC 33453 / NBRC 100688 / NCTC 11704 / L1) (Acholeplasma florum)).